The primary structure comprises 236 residues: Biosynthetic peptidoglycan transglycosylase (236 aa).

A helical membrane pass occupies residues 12 to 31 (ALFWFAAGSIVLVLVFRWVP).

This sequence belongs to the glycosyltransferase 51 family.

It localises to the cell inner membrane. The catalysed reaction is [GlcNAc-(1-&gt;4)-Mur2Ac(oyl-L-Ala-gamma-D-Glu-L-Lys-D-Ala-D-Ala)](n)-di-trans,octa-cis-undecaprenyl diphosphate + beta-D-GlcNAc-(1-&gt;4)-Mur2Ac(oyl-L-Ala-gamma-D-Glu-L-Lys-D-Ala-D-Ala)-di-trans,octa-cis-undecaprenyl diphosphate = [GlcNAc-(1-&gt;4)-Mur2Ac(oyl-L-Ala-gamma-D-Glu-L-Lys-D-Ala-D-Ala)](n+1)-di-trans,octa-cis-undecaprenyl diphosphate + di-trans,octa-cis-undecaprenyl diphosphate + H(+). Its pathway is cell wall biogenesis; peptidoglycan biosynthesis. Its function is as follows. Peptidoglycan polymerase that catalyzes glycan chain elongation from lipid-linked precursors. The protein is Biosynthetic peptidoglycan transglycosylase of Pseudomonas putida (strain W619).